Consider the following 343-residue polypeptide: Mitochondrial distribution and morphology protein 34 (343 aa).

The SMP-LTD domain occupies 1 to 196 (MSFVFPSWST…LPGIIHRLSQ (196 aa)). Disordered stretches follow at residues 227–255 (EVEEEENEENHGTSPGNEESFPPRHIGPG) and 300–325 (GAGTGSSGRASLASSSVGEGDIKAKR). Positions 306-317 (SGRASLASSSVG) are enriched in low complexity.

It belongs to the MDM34 family. In terms of assembly, component of the ER-mitochondria encounter structure (ERMES) or MDM complex, composed of MMM1, MDM10, MDM12 and MDM34.

It is found in the mitochondrion outer membrane. In terms of biological role, component of the ERMES/MDM complex, which serves as a molecular tether to connect the endoplasmic reticulum (ER) and mitochondria. Components of this complex are involved in the control of mitochondrial shape and protein biogenesis, and function in nonvesicular lipid trafficking between the ER and mitochondria. MDM34 is required for the interaction of the ER-resident membrane protein MMM1 and the outer mitochondrial membrane-resident beta-barrel protein MDM10. In Cryptococcus neoformans var. neoformans serotype D (strain B-3501A) (Filobasidiella neoformans), this protein is Mitochondrial distribution and morphology protein 34.